The primary structure comprises 214 residues: MNYPHPIIAREGWPFIAIAAVIALLIHAVGGFGFAWPFWLLLVFVVQFFRDPQRPIPAQPNAVLCPADGRIVAVETAHDPYANREALKISVFMNVFNVHSQRSPVDGAITKVEYFPGAFLNAAIDKASTENERNAVVIQTASGKTVTSVQIAGLIARRILCYVRAGEPLSRGQRYGFIRFGSRVDVYLPLGSRAKVSIGEKVYASSTILAELEQ.

The active-site Schiff-base intermediate with substrate; via pyruvic acid is serine 182. The residue at position 182 (serine 182) is a Pyruvic acid (Ser); by autocatalysis.

It belongs to the phosphatidylserine decarboxylase family. PSD-A subfamily. As to quaternary structure, heterodimer of a large membrane-associated beta subunit and a small pyruvoyl-containing alpha subunit. Requires pyruvate as cofactor. Is synthesized initially as an inactive proenzyme. Formation of the active enzyme involves a self-maturation process in which the active site pyruvoyl group is generated from an internal serine residue via an autocatalytic post-translational modification. Two non-identical subunits are generated from the proenzyme in this reaction, and the pyruvate is formed at the N-terminus of the alpha chain, which is derived from the carboxyl end of the proenzyme. The post-translation cleavage follows an unusual pathway, termed non-hydrolytic serinolysis, in which the side chain hydroxyl group of the serine supplies its oxygen atom to form the C-terminus of the beta chain, while the remainder of the serine residue undergoes an oxidative deamination to produce ammonia and the pyruvoyl prosthetic group on the alpha chain.

It localises to the cell membrane. The enzyme catalyses a 1,2-diacyl-sn-glycero-3-phospho-L-serine + H(+) = a 1,2-diacyl-sn-glycero-3-phosphoethanolamine + CO2. Its pathway is phospholipid metabolism; phosphatidylethanolamine biosynthesis; phosphatidylethanolamine from CDP-diacylglycerol: step 2/2. Its function is as follows. Catalyzes the formation of phosphatidylethanolamine (PtdEtn) from phosphatidylserine (PtdSer). This is Phosphatidylserine decarboxylase proenzyme from Burkholderia multivorans (strain ATCC 17616 / 249).